Reading from the N-terminus, the 377-residue chain is 4-hydroxy-3-methylbut-2-en-1-yl diphosphate synthase (flavodoxin) (377 aa).

Residues cysteine 275, cysteine 278, cysteine 310, and glutamate 317 each coordinate [4Fe-4S] cluster.

Belongs to the IspG family. [4Fe-4S] cluster is required as a cofactor.

It carries out the reaction (2E)-4-hydroxy-3-methylbut-2-enyl diphosphate + oxidized [flavodoxin] + H2O + 2 H(+) = 2-C-methyl-D-erythritol 2,4-cyclic diphosphate + reduced [flavodoxin]. It participates in isoprenoid biosynthesis; isopentenyl diphosphate biosynthesis via DXP pathway; isopentenyl diphosphate from 1-deoxy-D-xylulose 5-phosphate: step 5/6. Functionally, converts 2C-methyl-D-erythritol 2,4-cyclodiphosphate (ME-2,4cPP) into 1-hydroxy-2-methyl-2-(E)-butenyl 4-diphosphate. The chain is 4-hydroxy-3-methylbut-2-en-1-yl diphosphate synthase (flavodoxin) from Jannaschia sp. (strain CCS1).